A 1183-amino-acid polypeptide reads, in one-letter code: SRC kinase signaling inhibitor 1 (1183 aa).

A disordered region spans residues Met-1–Phe-44. Phosphoserine occurs at positions 13 and 18. A compositionally biased stretch (gly residues) spans Leu-31–Gly-41. Ser-45 carries the phosphoserine modification. Thr-52 carries the phosphothreonine modification. Residues Ser-53, Ser-64, Ser-143, Ser-165, Ser-169, Ser-179, and Ser-225 each carry the phosphoserine modification. Phosphotyrosine is present on Tyr-241. Residues Ala-284–Asp-379 form a disordered region. Polar residues predominate over residues Arg-286–Asn-296. Residues Leu-297–Gly-306 are compositionally biased toward low complexity. 3 positions are modified to phosphoserine: Ser-298, Ser-307, and Ser-324. Residues Pro-313 to Ser-331 are compositionally biased toward low complexity. Omega-N-methylarginine is present on residues Arg-329 and Arg-336. Phosphoserine occurs at positions 343, 362, and 364. A compositionally biased stretch (basic and acidic residues) spans Leu-369–Asp-379. At Tyr-396 the chain carries Phosphotyrosine. The segment at Tyr-466–Thr-643 is disordered. A compositionally biased stretch (pro residues) spans Pro-485–Gly-497. Phosphoserine is present on residues Ser-493, Ser-496, and Ser-500. An Omega-N-methylarginine modification is found at Arg-501. Ser-503, Ser-513, Ser-515, Ser-517, and Ser-522 each carry phosphoserine. The segment covering Gly-524 to Ser-541 has biased composition (low complexity). A compositionally biased stretch (basic and acidic residues) spans Lys-562 to Glu-574. A phosphoserine mark is found at Ser-598 and Ser-621. A phosphothreonine mark is found at Thr-624 and Thr-637. The span at Ala-634–Thr-643 shows a compositional bias: low complexity. Residues Arg-647–Val-697 are interaction with SNAP25. 2 coiled-coil regions span residues Leu-654–Leu-674 and Glu-726–Asp-746. Residues Ser-844, Ser-857, and Ser-866 each carry the phosphoserine modification. Disordered regions lie at residues Glu-861–Ser-907 and Asp-949–Lys-1032. Residue Thr-884 is modified to Phosphothreonine. A Phosphoserine modification is found at Ser-987. Over residues Lys-1002–Arg-1011 the composition is skewed to pro residues. Ser-1043 and Ser-1060 each carry phosphoserine. Disordered stretches follow at residues Ala-1058–Asp-1081 and Gly-1105–Phe-1183. The span at Gln-1135–Phe-1183 shows a compositional bias: polar residues.

This sequence belongs to the SRCIN1 family. Interacts with the N-terminal coiled-coil region of SNAP25. Interacts with BCAR1/p130Cas and SRC through its C-terminal domain. Interacts with CSK, CTTN, SORBS3/vinexin, SYP and MAPRE3/EB3. Post-translationally, tyrosine-phosphorylated in response to EGF and to cell adhesion to integrin ligands. In terms of tissue distribution, expressed in some primary breast carcinomas where its presence is significantly associated with increased tumor size. Not detected in normal breast tissue.

The protein localises to the cytoplasm. The protein resides in the cytoskeleton. It is found in the cell projection. It localises to the axon. Its subcellular location is the dendrite. The protein localises to the presynapse. The protein resides in the postsynapse. It is found in the postsynaptic density. Acts as a negative regulator of SRC by activating CSK which inhibits SRC activity and downstream signaling, leading to impaired cell spreading and migration. Regulates dendritic spine morphology. Involved in calcium-dependent exocytosis. May play a role in neurotransmitter release or synapse maintenance. In Homo sapiens (Human), this protein is SRC kinase signaling inhibitor 1.